Here is a 91-residue protein sequence, read N- to C-terminus: Small ribosomal subunit protein uS19 (91 aa).

This sequence belongs to the universal ribosomal protein uS19 family.

Protein S19 forms a complex with S13 that binds strongly to the 16S ribosomal RNA. The sequence is that of Small ribosomal subunit protein uS19 from Parasynechococcus marenigrum (strain WH8102).